Here is a 610-residue protein sequence, read N- to C-terminus: Serine/threonine-protein kinase RCK2 (610 aa).

2 disordered regions span residues 1 to 55 (MLKI…QDKN) and 99 to 127 (TSVP…SLSE). Residues 11–24 (KKPDQADLSQESKK) show a composition bias toward basic and acidic residues. Positions 31-55 (RSSGTNNKDVSQITSSPKKSFQDKN) are enriched in polar residues. Residues Ser46 and Ser50 each carry the phosphoserine modification. A Protein kinase domain is found at 163–478 (YKLINKIGEG…IDQFLDDPWL (316 aa)). Residue 169–177 (IGEGAFSKV) coordinates ATP. At Ser187 the chain carries Phosphoserine. Lys201 lines the ATP pocket. Asp313 acts as the Proton acceptor in catalysis. Thr350 bears the Phosphothreonine mark. The calmodulin-binding stretch occupies residues 493–506 (KKAGTSERRHPHKK). Phosphoserine is present on Ser520. Residues 541–564 (EDRMGTRGGLGSLAEDEELEDSYS) are disordered.

This sequence belongs to the protein kinase superfamily. CAMK Ser/Thr protein kinase family. CaMK subfamily. Post-translationally, autophosphorylated. Phosphorylated by HOG1 at Ser-520 after osmotic stress.

The protein resides in the cytoplasm. The catalysed reaction is L-seryl-[protein] + ATP = O-phospho-L-seryl-[protein] + ADP + H(+). It catalyses the reaction L-threonyl-[protein] + ATP = O-phospho-L-threonyl-[protein] + ADP + H(+). With respect to regulation, activated by Ser-520 phosphorylation by HOG1. Functionally, serine/threonine-protein kinase involved in a signal transduction pathway that is activated by changes in the osmolarity of the extracellular environment. This Saccharomyces cerevisiae (strain ATCC 204508 / S288c) (Baker's yeast) protein is Serine/threonine-protein kinase RCK2 (RCK2).